The following is a 140-amino-acid chain: Large ribosomal subunit protein bL17 (140 aa).

Belongs to the bacterial ribosomal protein bL17 family. Part of the 50S ribosomal subunit. Contacts protein L32.

The polypeptide is Large ribosomal subunit protein bL17 (Ruegeria pomeroyi (strain ATCC 700808 / DSM 15171 / DSS-3) (Silicibacter pomeroyi)).